A 793-amino-acid chain; its full sequence is MMAALYPSTDLSGASSSSLPSSPSSSSPNEVMALKDVREVKEENTLNEKLFLLACDKGDYYMVKEILEENSSGDLNINCVDVLGRNAVTITIENENLDILQLLLDYGCQSADALLVAIDSEVVGAVDILLNHRPKRSSRPTIVKLMERIQNPEYSTTMDVAPVILAAHRNNYEILTMLLKQDVSLPKPHAVGCECTLCSAKNKKDSLRHSRFRLDIYRCLASPALIMLTEEDPILGAFELSADLKELSLVEVEFRNDYEELARQCKMFAKDLLAQARNSRELEVILNHTSNDEPLDKRGLLEERMNLSRLKLAIKYNQKEFVSQSNCQQFLNTVWFGQMSGYRRKPTCKKIMTVLTVGIFWPVLSLCYLIAPKSQFGRIIHTPFMKFIIHGASYFTFLLLLNLYSLVYHEDKKNTMGPALERIDYLLILWIIGMIWSDIKRLWYEGLEDFLEESRNQLSFVMNSLYLATFALKEEAHNKFHDFADRKDWDAFHPTLVAEGLFAFANVLSYLRLFFYVYTSSILGPLQISMGRMLQDFGKFLGMFLLVLFSFTIGLTQLYDKGYTPKEQKDCVGIFCEQQSNDTFHSFIGTCFALFWYIFSLAHVAILCTRFSYGEELQSFVGAFIVGTYNVVVVIVLTKLLVAMLHKSFQLIANHEDKEWKFARAKLWLSYFDDKCTLPPPFNIIPSPKTICYMISSLSKWICSHTSKGKVKRQNSLKEWRHLNEKRDENYQKVMCCLVRRYLTSMRQKMQSTDQATVENLNELRQDLSKFRNEIRDLLGFRTSKYAMFYPRN.

Residues 1 to 30 (MMAALYPSTDLSGASSSSLPSSPSSSSPNE) form a disordered region. Residues 1–345 (MMAALYPSTD…FGQMSGYRRK (345 aa)) are Cytoplasmic-facing. The span at 15 to 28 (SSSSLPSSPSSSSP) shows a compositional bias: low complexity. ANK repeat units lie at residues 46–75 (LNEK…SGDL), 83–109 (LGRN…YGCQ), 111–156 (ADAL…EYST), and 158–180 (MDVA…MLLK). Zn(2+) contacts are provided by His-189, Cys-193, Cys-195, and Cys-198. An intramembrane region (discontinuously helical) is located at residues 346–379 (PTCKKIMTVLTVGIFWPVLSLCYLIAPKSQFGRI). Over 380-386 (IHTPFMK) the chain is Cytoplasmic. Residues 387 to 404 (FIIHGASYFTFLLLLNLY) traverse the membrane as a helical segment. Over 405-422 (SLVYHEDKKNTMGPALER) the chain is Extracellular. The helical transmembrane segment at 423-439 (IDYLLILWIIGMIWSDI) threads the bilayer. Over 440–455 (KRLWYEGLEDFLEESR) the chain is Cytoplasmic. Residues 456–475 (NQLSFVMNSLYLATFALKEE) form a helical membrane-spanning segment. The Extracellular segment spans residues 476–496 (AHNKFHDFADRKDWDAFHPTL). A helical transmembrane segment spans residues 497 to 517 (VAEGLFAFANVLSYLRLFFYV). Residues 518–536 (YTSSILGPLQISMGRMLQD) are Cytoplasmic-facing. Residues 537–558 (FGKFLGMFLLVLFSFTIGLTQL) traverse the membrane as a helical segment. At 559–623 (YDKGYTPKEQ…GEELQSFVGA (65 aa)) the chain is on the extracellular side. A disulfide bond links Cys-571 and Cys-576. A helical transmembrane segment spans residues 624-644 (FIVGTYNVVVVIVLTKLLVAM). At 645-793 (LHKSFQLIAN…SKYAMFYPRN (149 aa)) the chain is on the cytoplasmic side.

Belongs to the transient receptor (TC 1.A.4) family. STrpC subfamily. TRPC1 sub-subfamily. Heterotetramer with TRPC4 and/or TRPC5. Forms a heteromeric ion channel with TRPC4, with a 1:3 TRPC1:TRPC4 stoichiometry. Unlike other TRP channel proteins, does not form a homomeric channel. Interacts with TRPC4AP. Interacts with ITPR3. Interacts with MX1 and RNF24. Interacts with FKBP4. Interacts with PLSCR1. Interacts with PKD2L2. Forms a heterotetramer with PKD2 with a 2:2 stoichiometry; has distinct channel properties separate from PKD2 or TRPC1 homomers alone. Post-translationally, activation of PRKCA induces phosphorylation of TRPC1 and subsequent Ca2+ entry into cells.

It localises to the cell membrane. It carries out the reaction Ca(2+)(in) = Ca(2+)(out). It catalyses the reaction Na(+)(in) = Na(+)(out). The catalysed reaction is Li(+)(in) = Li(+)(out). The enzyme catalyses Cs(+)(in) = Cs(+)(out). With respect to regulation, may be operated by a phosphatidylinositol second messenger system activated by receptor tyrosine kinases or G-protein coupled receptors. Also activated by intracellular calcium store depletion. Functionally, forms a receptor-activated non-selective calcium permeant cation channel. Forms a heteromeric ion channel with TRPC4 or TRPC5 that has reduced calcium permeability compared to the homomeric TRPC4 or TRPC5 channel. Also permeable to monovalent ions including sodium, lithium and cesium ions. The protein is Short transient receptor potential channel 1 (TRPC1) of Bos taurus (Bovine).